A 158-amino-acid chain; its full sequence is uncharacterized protein (158 aa).

2 helical membrane passes run 10–30 (LFFIFSGGLVFFFFEFFLNHF) and 40–60 (YITFYFIKNHPSLFLLFNFFL).

The protein localises to the membrane. This is an uncharacterized protein from Schizosaccharomyces pombe (strain 972 / ATCC 24843) (Fission yeast).